Here is a 247-residue protein sequence, read N- to C-terminus: UPF0309 protein Teth39_1980 (247 aa).

The SIS domain maps to 31–213 (IANSLLKEED…EAEIVFIMIK (183 aa)).

Belongs to the UPF0309 family.

The polypeptide is UPF0309 protein Teth39_1980 (Thermoanaerobacter pseudethanolicus (strain ATCC 33223 / 39E) (Clostridium thermohydrosulfuricum)).